Reading from the N-terminus, the 178-residue chain is MYHQLILMALIGVIMANVVPFSMSNIPEEYKEFIPEEVKNFYKNLTQEDRQILRELASKHATFTNEDAALEALKNKSDKLYQKAVELRNFVKAKIDSLKPDAKAFVDEIIAKVRSLRPEDGQKLDMEKLKQAARDIIAKYEALNEETKEELKATFPNTTKIITNEKFKRIANSFLQKN.

The N-terminal stretch at 1-16 (MYHQLILMALIGVIMA) is a signal peptide. Residues Asn44 and Asn75 are each glycosylated (N-linked (GlcNAc...) asparagine). Coiled-coil stretches lie at residues 67-89 (DAALEALKNKSDKLYQKAVELRN) and 122-154 (QKLDMEKLKQAARDIIAKYEALNEETKEELKAT). N-linked (GlcNAc...) asparagine glycosylation is present at Asn157.

Belongs to the fatty-acid and retinol-binding protein (FARBP) family. N-glycosylated.

It is found in the secreted. Its function is as follows. Binds retinol and different fatty acids. The sequence is that of Fatty-acid and retinol-binding protein 1 from Onchocerca ochengi (Filarial nematode worm).